The following is a 33-amino-acid chain: Cytochrome b6-f complex subunit 8 (33 aa).

A helical transmembrane segment spans residues 2 to 22 (LITLGWASLAALFSFSIAMVV).

It belongs to the PetN family. The 4 large subunits of the cytochrome b6-f complex are cytochrome b6, subunit IV (17 kDa polypeptide, PetD), cytochrome f and the Rieske protein, while the 4 small subunits are PetG, PetL, PetM and PetN. The complex functions as a dimer.

Its subcellular location is the plastid. It localises to the organellar chromatophore thylakoid membrane. Functionally, component of the cytochrome b6-f complex, which mediates electron transfer between photosystem II (PSII) and photosystem I (PSI), cyclic electron flow around PSI, and state transitions. In Paulinella chromatophora, this protein is Cytochrome b6-f complex subunit 8.